The primary structure comprises 559 residues: Formate--tetrahydrofolate ligase (559 aa).

Residue T68–T75 participates in ATP binding.

The protein belongs to the formate--tetrahydrofolate ligase family.

It carries out the reaction (6S)-5,6,7,8-tetrahydrofolate + formate + ATP = (6R)-10-formyltetrahydrofolate + ADP + phosphate. Its pathway is one-carbon metabolism; tetrahydrofolate interconversion. In Sinorhizobium fredii (strain NBRC 101917 / NGR234), this protein is Formate--tetrahydrofolate ligase.